Reading from the N-terminus, the 317-residue chain is tRNA dimethylallyltransferase (317 aa).

ATP is bound at residue 18-25; it reads GPTATGKT. A substrate-binding site is contributed by 20-25; that stretch reads TATGKT. 3 interaction with substrate tRNA regions span residues 43–46, 167–171, and 281–288; these read DSAL, QRIQR, and KRQITWLR.

It belongs to the IPP transferase family. As to quaternary structure, monomer. Mg(2+) serves as cofactor.

It carries out the reaction adenosine(37) in tRNA + dimethylallyl diphosphate = N(6)-dimethylallyladenosine(37) in tRNA + diphosphate. Its function is as follows. Catalyzes the transfer of a dimethylallyl group onto the adenine at position 37 in tRNAs that read codons beginning with uridine, leading to the formation of N6-(dimethylallyl)adenosine (i(6)A). This chain is tRNA dimethylallyltransferase, found in Alkalilimnicola ehrlichii (strain ATCC BAA-1101 / DSM 17681 / MLHE-1).